Here is a 472-residue protein sequence, read N- to C-terminus: MHSNVYLPETFLEKIKTILPSALNMDDFIAYCQQPLRKSIRVNTLKISVDAFLTIAQEKGWTLHPVPWCETGFWIEADESKVPLGNTAEHMCGLFYIQEASSMMPVSALFLGENQFESVLDTAAAPGSKTTQIAALMNNQGILVANEYAASRVKVLHANIERCGVRNAALSNFDGRVFGGWLPESFDAVLLDAPCSGEGTVRKDEDAMKNWSQESVLEIAATQKDLIESAFQALKPGGVMVYSTCTLSEEENQQVCHHLKHTFGDAVAFESLSSLFDGAEKALTEDGFLHIFPQVYDSEGFFVARIRKLASVNSPDVNKKMGKFPFQKASKKESALIEKSLSDSLDISLPADSTIWLRDNDVWLFPNALEPMLGELRFSRMGIKLAEKHKNGYRWQHQIATTLASGDEKTVVDIDTDAAREWFMGRDIYPENSGKGEVFVRYQGAIIGLGKWVSNKIKNGLPRELVRDKNLF.

Residues 123 to 129 (AAAPGSK), Glu-147, Asp-174, and Asp-192 contribute to the S-adenosyl-L-methionine site. Residue Cys-245 is the Nucleophile of the active site.

This sequence belongs to the class I-like SAM-binding methyltransferase superfamily. RsmB/NOP family.

It localises to the cytoplasm. The enzyme catalyses cytidine(1407) in 16S rRNA + S-adenosyl-L-methionine = 5-methylcytidine(1407) in 16S rRNA + S-adenosyl-L-homocysteine + H(+). Its function is as follows. Specifically methylates the cytosine at position 1407 (m5C1407) of 16S rRNA. The protein is Ribosomal RNA small subunit methyltransferase F of Vibrio vulnificus (strain CMCP6).